A 901-amino-acid polypeptide reads, in one-letter code: HTH-type transcriptional regulator MalT (901 aa).

ATP is bound at residue 39–46; it reads SPAGYGKT. The HTH luxR-type domain occupies 829-894; sequence ELIRTSPLTQ…DAVQHAQQLL (66 aa). A DNA-binding region (H-T-H motif) is located at residues 853-872; sequence NEQIAGELAVAATTIKTHIR.

It belongs to the MalT family. In terms of assembly, monomer in solution. Oligomerizes to an active state in the presence of the positive effectors ATP and maltotriose.

With respect to regulation, activated by ATP and maltotriose, which are both required for DNA binding. Its function is as follows. Positively regulates the transcription of the maltose regulon whose gene products are responsible for uptake and catabolism of malto-oligosaccharides. Specifically binds to the promoter region of its target genes, recognizing a short DNA motif called the MalT box. The polypeptide is HTH-type transcriptional regulator MalT (Salmonella choleraesuis (strain SC-B67)).